Consider the following 878-residue polypeptide: Alanine--tRNA ligase (878 aa).

The Zn(2+) site is built by His-567, His-571, Cys-669, and His-673.

It belongs to the class-II aminoacyl-tRNA synthetase family. Zn(2+) is required as a cofactor.

Its subcellular location is the cytoplasm. The enzyme catalyses tRNA(Ala) + L-alanine + ATP = L-alanyl-tRNA(Ala) + AMP + diphosphate. Functionally, catalyzes the attachment of alanine to tRNA(Ala) in a two-step reaction: alanine is first activated by ATP to form Ala-AMP and then transferred to the acceptor end of tRNA(Ala). Also edits incorrectly charged Ser-tRNA(Ala) and Gly-tRNA(Ala) via its editing domain. The chain is Alanine--tRNA ligase from Rickettsia akari (strain Hartford).